The following is a 467-amino-acid chain: MLATDSDPIVAIATASGRGGIGVVRISLGRAGEAAALALSDALCGARLTPRHASYVPFLDGAGEPLDRGIALYFPAPHSYTGEHVLELQGHGGPIVLQLVLQRCLDAGRAYGLRLAEPGEFTRRAFLNDKLDLAQAEAVADLIEASTEAAARSAGRSLDGAFSRDIHALVDDVIALRMLVEATLDFPEEEIDFLEAADARGKLAHIRERLAHVLGDARQGALLREGLSVVLAGQPNVGKSSLLNALAGAELAIVTPIAGTTRDKVAQTIQVEGIPLHIIDTAGLRETEDEVEKIGIARTWGEIERADVVLHLLDARSGLGPDDEAIAARFPAGVPVVRVLNKTDLTEAPASVARVGSGAERADLCEVRLSAKRGDGIDLLRGELLRIAGWQAGAESVYLARERHLIALRAAQAHVARAAEHADQNAQALDLFAEELRLAQEQLNSITGEFSSDDLLGVIFSRFCIGK.

3 residues coordinate (6S)-5-formyl-5,6,7,8-tetrahydrofolate: Arg25, Glu87, and Lys130. A TrmE-type G domain is found at 226–389; the sequence is GLSVVLAGQP…LRGELLRIAG (164 aa). Asn236 is a K(+) binding site. GTP is bound by residues 236–241, 255–261, and 280–283; these read NVGKSS, TPIAGTT, and DTAG. Residue Ser240 participates in Mg(2+) binding. Residues Thr255, Ile257, and Thr260 each coordinate K(+). Mg(2+) is bound at residue Thr261. Lys467 contacts (6S)-5-formyl-5,6,7,8-tetrahydrofolate.

It belongs to the TRAFAC class TrmE-Era-EngA-EngB-Septin-like GTPase superfamily. TrmE GTPase family. Homodimer. Heterotetramer of two MnmE and two MnmG subunits. The cofactor is K(+).

Its subcellular location is the cytoplasm. In terms of biological role, exhibits a very high intrinsic GTPase hydrolysis rate. Involved in the addition of a carboxymethylaminomethyl (cmnm) group at the wobble position (U34) of certain tRNAs, forming tRNA-cmnm(5)s(2)U34. The polypeptide is tRNA modification GTPase MnmE (Burkholderia thailandensis (strain ATCC 700388 / DSM 13276 / CCUG 48851 / CIP 106301 / E264)).